The chain runs to 1385 residues: DNA-directed RNA polymerase subunit beta (1385 aa).

Belongs to the RNA polymerase beta chain family. As to quaternary structure, the RNAP catalytic core consists of 2 alpha, 1 beta, 1 beta' and 1 omega subunit. When a sigma factor is associated with the core the holoenzyme is formed, which can initiate transcription.

It carries out the reaction RNA(n) + a ribonucleoside 5'-triphosphate = RNA(n+1) + diphosphate. Functionally, DNA-dependent RNA polymerase catalyzes the transcription of DNA into RNA using the four ribonucleoside triphosphates as substrates. The polypeptide is DNA-directed RNA polymerase subunit beta (Jannaschia sp. (strain CCS1)).